The primary structure comprises 400 residues: CCA-adding enzyme (400 aa).

ATP is bound by residues Gly-28 and Arg-31. 2 residues coordinate CTP: Gly-28 and Arg-31. Positions 41 and 43 each coordinate Mg(2+). ATP is bound by residues Arg-112, Asp-155, Arg-158, Arg-161, and Arg-164. Positions 112, 155, 158, 161, and 164 each coordinate CTP.

It belongs to the tRNA nucleotidyltransferase/poly(A) polymerase family. Bacterial CCA-adding enzyme type 3 subfamily. As to quaternary structure, homodimer. Mg(2+) serves as cofactor.

The catalysed reaction is a tRNA precursor + 2 CTP + ATP = a tRNA with a 3' CCA end + 3 diphosphate. It catalyses the reaction a tRNA with a 3' CCA end + 2 CTP + ATP = a tRNA with a 3' CCACCA end + 3 diphosphate. In terms of biological role, catalyzes the addition and repair of the essential 3'-terminal CCA sequence in tRNAs without using a nucleic acid template. Adds these three nucleotides in the order of C, C, and A to the tRNA nucleotide-73, using CTP and ATP as substrates and producing inorganic pyrophosphate. tRNA 3'-terminal CCA addition is required both for tRNA processing and repair. Also involved in tRNA surveillance by mediating tandem CCA addition to generate a CCACCA at the 3' terminus of unstable tRNAs. While stable tRNAs receive only 3'-terminal CCA, unstable tRNAs are marked with CCACCA and rapidly degraded. This is CCA-adding enzyme from Staphylococcus haemolyticus (strain JCSC1435).